Reading from the N-terminus, the 515-residue chain is METSILKTAVKNFLGNSPDWYKLAIIIFLIINPLIFFFINPFVTGWLLVIEFIFTLAMALKCYPLQPGGLLAIEAVIIGMTSPQQVGHEIANNLEVVLLLIFMVAGIYFMKQLLLFAFTKLLLSIKSKRMLALAFCLASAFLSAFLDALTVIAVVISVSLGFYSIYNNFITDQNDVINAKHDNHIDTAKKKQTLEQFRAFLRSLMMHAGVGTALGGVMTMVGEPQNLIIAKNVNWDFVTFFIRMAPITLPVFICGLLVCFLVEHFKLFGYGTELPERVRQVLEDYDKKTSAKRTHKEKAQLIAQALIGIWLIVALAFHLAEVGLIGLSVIILTTSFCGITEEHALGKAFEEALPFTALLTVFFSIVAVIVDQQLFTPFIQFVLQVSETSQLSLFYLFNGLLSSVSDNVFVGTVYINEARTAMQEGLISHKQFEYLAVAINTGTNLPSVATPNGQAAFLFLLTSTLSPLIRLSYGRMVIMALPYTIVMTLVGLLCVEFLLIPVTDMMVHWGLIALP.

A run of 11 helical transmembrane segments spans residues 23-43, 45-65, 96-116, 136-156, 204-224, 245-265, 305-325, 349-369, 393-413, 449-469, and 480-500; these read LAII…NPFV, GWLL…CYPL, VVLL…LLLF, CLAS…AVVI, LMMH…VGEP, APIT…VEHF, ALIG…VGLI, FEEA…VAVI, LFYL…VGTV, ATPN…SPLI, and ALPY…FLLI.

The protein belongs to the NhaB Na(+)/H(+) (TC 2.A.34) antiporter family.

The protein localises to the cell inner membrane. It carries out the reaction 2 Na(+)(in) + 3 H(+)(out) = 2 Na(+)(out) + 3 H(+)(in). In terms of biological role, na(+)/H(+) antiporter that extrudes sodium in exchange for external protons. This is Na(+)/H(+) antiporter NhaB from Photorhabdus laumondii subsp. laumondii (strain DSM 15139 / CIP 105565 / TT01) (Photorhabdus luminescens subsp. laumondii).